The primary structure comprises 261 residues: ATP synthase subunit a (261 aa).

6 helical membrane-spanning segments follow: residues 45–65 (ITNV…ILVL), 107–127 (VMTL…PLSF), 133–153 (MAVT…LGFM), 162–182 (MFWV…IEVI), 209–229 (IAGF…VTAI), and 232–252 (LELL…CVYL).

This sequence belongs to the ATPase A chain family. In terms of assembly, F-type ATPases have 2 components, CF(1) - the catalytic core - and CF(0) - the membrane proton channel. CF(1) has five subunits: alpha(3), beta(3), gamma(1), delta(1), epsilon(1). CF(0) has four main subunits: a, b, b' and c.

The protein resides in the cell inner membrane. Its function is as follows. Key component of the proton channel; it plays a direct role in the translocation of protons across the membrane. This is ATP synthase subunit a from Cereibacter sphaeroides (strain ATCC 17029 / ATH 2.4.9) (Rhodobacter sphaeroides).